A 387-amino-acid polypeptide reads, in one-letter code: Phosphoglycerate kinase (387 aa).

Substrate contacts are provided by residues Asp21–Asn23, Arg36, His59–Arg62, Arg113, and Arg146. Residues Lys197, Glu314, and Gly340 to Thr343 each bind ATP.

This sequence belongs to the phosphoglycerate kinase family. Monomer.

The protein resides in the cytoplasm. The catalysed reaction is (2R)-3-phosphoglycerate + ATP = (2R)-3-phospho-glyceroyl phosphate + ADP. The protein operates within carbohydrate degradation; glycolysis; pyruvate from D-glyceraldehyde 3-phosphate: step 2/5. In Sodalis glossinidius (strain morsitans), this protein is Phosphoglycerate kinase.